We begin with the raw amino-acid sequence, 394 residues long: Anhydro-N-acetylmuramic acid kinase (394 aa).

11-18 contributes to the ATP binding site; the sequence is GTSADGID.

The protein belongs to the anhydro-N-acetylmuramic acid kinase family.

It carries out the reaction 1,6-anhydro-N-acetyl-beta-muramate + ATP + H2O = N-acetyl-D-muramate 6-phosphate + ADP + H(+). It participates in amino-sugar metabolism; 1,6-anhydro-N-acetylmuramate degradation. The protein operates within cell wall biogenesis; peptidoglycan recycling. Catalyzes the specific phosphorylation of 1,6-anhydro-N-acetylmuramic acid (anhMurNAc) with the simultaneous cleavage of the 1,6-anhydro ring, generating MurNAc-6-P. Is required for the utilization of anhMurNAc either imported from the medium or derived from its own cell wall murein, and thus plays a role in cell wall recycling. The polypeptide is Anhydro-N-acetylmuramic acid kinase (Deinococcus geothermalis (strain DSM 11300 / CIP 105573 / AG-3a)).